Reading from the N-terminus, the 246-residue chain is UDP-2,3-diacylglucosamine hydrolase (246 aa).

The Mn(2+) site is built by D8, H10, D41, N79, and H114. 79–80 (NR) is a binding site for substrate. Residues D122, S160, K164, K167, and H195 each contribute to the substrate site. 2 residues coordinate Mn(2+): H195 and H197.

It belongs to the LpxH family. It depends on Mn(2+) as a cofactor.

The protein localises to the cell inner membrane. It catalyses the reaction UDP-2-N,3-O-bis[(3R)-3-hydroxytetradecanoyl]-alpha-D-glucosamine + H2O = 2-N,3-O-bis[(3R)-3-hydroxytetradecanoyl]-alpha-D-glucosaminyl 1-phosphate + UMP + 2 H(+). The protein operates within glycolipid biosynthesis; lipid IV(A) biosynthesis; lipid IV(A) from (3R)-3-hydroxytetradecanoyl-[acyl-carrier-protein] and UDP-N-acetyl-alpha-D-glucosamine: step 4/6. Functionally, hydrolyzes the pyrophosphate bond of UDP-2,3-diacylglucosamine to yield 2,3-diacylglucosamine 1-phosphate (lipid X) and UMP by catalyzing the attack of water at the alpha-P atom. Involved in the biosynthesis of lipid A, a phosphorylated glycolipid that anchors the lipopolysaccharide to the outer membrane of the cell. The sequence is that of UDP-2,3-diacylglucosamine hydrolase from Tolumonas auensis (strain DSM 9187 / NBRC 110442 / TA 4).